The primary structure comprises 360 residues: Phospho-N-acetylmuramoyl-pentapeptide-transferase (360 aa).

A run of 10 helical transmembrane segments spans residues 27–47 (GALI…ISSL), 70–90 (GTPT…SILW), 93–113 (LSSV…AIGF), 134–154 (LALE…AGQE), 168–188 (LLLN…VGAG), 205–225 (VMVA…AIFA), 239–259 (LSVI…FNAP), 262–282 (AIFM…TVAV), 288–308 (IVLA…IIQV), and 337–357 (QVVI…LSTL).

The protein belongs to the glycosyltransferase 4 family. MraY subfamily. It depends on Mg(2+) as a cofactor.

It localises to the cell inner membrane. It catalyses the reaction UDP-N-acetyl-alpha-D-muramoyl-L-alanyl-gamma-D-glutamyl-meso-2,6-diaminopimeloyl-D-alanyl-D-alanine + di-trans,octa-cis-undecaprenyl phosphate = di-trans,octa-cis-undecaprenyl diphospho-N-acetyl-alpha-D-muramoyl-L-alanyl-D-glutamyl-meso-2,6-diaminopimeloyl-D-alanyl-D-alanine + UMP. It participates in cell wall biogenesis; peptidoglycan biosynthesis. Catalyzes the initial step of the lipid cycle reactions in the biosynthesis of the cell wall peptidoglycan: transfers peptidoglycan precursor phospho-MurNAc-pentapeptide from UDP-MurNAc-pentapeptide onto the lipid carrier undecaprenyl phosphate, yielding undecaprenyl-pyrophosphoryl-MurNAc-pentapeptide, known as lipid I. This chain is Phospho-N-acetylmuramoyl-pentapeptide-transferase, found in Chelativorans sp. (strain BNC1).